Consider the following 987-residue polypeptide: uncharacterized protein (987 aa).

Transmembrane regions (helical) follow at residues Phe12–Gly32 and Val958–Leu978.

This sequence to M.jannaschii MJ1393 and A.fulgidus AF2028.

Its subcellular location is the cell membrane. This is an uncharacterized protein from Methanocaldococcus jannaschii (strain ATCC 43067 / DSM 2661 / JAL-1 / JCM 10045 / NBRC 100440) (Methanococcus jannaschii).